A 472-amino-acid chain; its full sequence is Alanine--anticapsin ligase (472 aa).

Position 109 (E109) interacts with Mg(2+). The ATP site is built by K138 and K178. The 214-residue stretch at 142–355 folds into the ATP-grasp domain; the sequence is RAAFNRAGVK…MAQLLLDVLC (214 aa). L182 lines the Mg(2+) pocket. Residues 184–185, 226–229, and Q268 each bind ATP; these read SS and EEFL. Substrate is bound by residues E273 and 309–311; that span reads HTE. Mg(2+) is bound by residues E311 and E324. A substrate-binding site is contributed by 328–331; it reads RFAG.

Monomer or homodimer. Mg(2+) serves as cofactor.

The catalysed reaction is L-anticapsin + L-alanine + ATP = bacilysin + ADP + phosphate + H(+). It functions in the pathway antibiotic biosynthesis; bacilysin biosynthesis. Its function is as follows. Part of the bacABCDEFG operon responsible for the biosynthesis of bacilysin, an irreversible inactivator of the glutaminase domain of glucosamine synthetase. Catalyzes the formation of alpha-dipeptides from various L-amino acids in the presence of ATP. In vivo catalyzes the ligation of L-alanine and L-anticapsin (epoxycyclohexanonyl-Ala) to produce the final bacilysin antibiotic (L-Ala-L-4S-cyclohexenonyl-Ala dipeptide). The chain is Alanine--anticapsin ligase from Bacillus amyloliquefaciens (Bacillus velezensis).